The sequence spans 466 residues: ATP synthase subunit beta (466 aa).

Residue 153–160 (GGAGVGKT) coordinates ATP.

It belongs to the ATPase alpha/beta chains family. As to quaternary structure, F-type ATPases have 2 components, CF(1) - the catalytic core - and CF(0) - the membrane proton channel. CF(1) has five subunits: alpha(3), beta(3), gamma(1), delta(1), epsilon(1). CF(0) has three main subunits: a(1), b(2) and c(9-12). The alpha and beta chains form an alternating ring which encloses part of the gamma chain. CF(1) is attached to CF(0) by a central stalk formed by the gamma and epsilon chains, while a peripheral stalk is formed by the delta and b chains.

It localises to the cell membrane. The enzyme catalyses ATP + H2O + 4 H(+)(in) = ADP + phosphate + 5 H(+)(out). Its function is as follows. Produces ATP from ADP in the presence of a proton gradient across the membrane. The catalytic sites are hosted primarily by the beta subunits. The protein is ATP synthase subunit beta of Leuconostoc mesenteroides subsp. mesenteroides (strain ATCC 8293 / DSM 20343 / BCRC 11652 / CCM 1803 / JCM 6124 / NCDO 523 / NBRC 100496 / NCIMB 8023 / NCTC 12954 / NRRL B-1118 / 37Y).